Consider the following 391-residue polypeptide: ATP phosphoribosyltransferase regulatory subunit (391 aa).

The protein belongs to the class-II aminoacyl-tRNA synthetase family. HisZ subfamily. In terms of assembly, heteromultimer composed of HisG and HisZ subunits.

The protein resides in the cytoplasm. It functions in the pathway amino-acid biosynthesis; L-histidine biosynthesis; L-histidine from 5-phospho-alpha-D-ribose 1-diphosphate: step 1/9. Its function is as follows. Required for the first step of histidine biosynthesis. May allow the feedback regulation of ATP phosphoribosyltransferase activity by histidine. This is ATP phosphoribosyltransferase regulatory subunit from Prochlorococcus marinus (strain NATL1A).